The primary structure comprises 460 residues: Acetyl-CoA decarbonylase/synthase complex subunit beta (460 aa).

Residues cysteine 188, cysteine 191, cysteine 277, and cysteine 279 each contribute to the [Ni-Fe-S] cluster site. Positions 402-416 (EETEPEEEEVEEAYP) are enriched in acidic residues. The disordered stretch occupies residues 402–422 (EETEPEEEEVEEAYPEETPIP).

Belongs to the CdhC family. In terms of assembly, monomer. The ACDS complex is made up of alpha, epsilon, beta, gamma and delta chains with a probable stoichiometry of (alpha(2)epsilon(2))(4)-beta(8)-(gamma(1)delta(1))(8). [Ni-Fe-S] cluster serves as cofactor.

It catalyses the reaction Co(I)-[corrinoid Fe-S protein] + acetyl-CoA + H(+) = methyl-Co(III)-[corrinoid Fe-S protein] + CO + CoA. Its function is as follows. Part of a complex that catalyzes the reversible cleavage of acetyl-CoA, allowing autotrophic growth from CO(2). The alpha-epsilon complex generates CO from CO(2), while the beta subunit (this protein) combines the CO with CoA and a methyl group to form acetyl-CoA. The methyl group, which is incorporated into acetyl-CoA, is transferred to the beta subunit by a corrinoid iron-sulfur protein (the gamma-delta complex). The sequence is that of Acetyl-CoA decarbonylase/synthase complex subunit beta from Methanothermobacter thermautotrophicus (strain ATCC 29096 / DSM 1053 / JCM 10044 / NBRC 100330 / Delta H) (Methanobacterium thermoautotrophicum).